The chain runs to 102 residues: Small ribosomal subunit protein uS10 (102 aa).

This sequence belongs to the universal ribosomal protein uS10 family. Part of the 30S ribosomal subunit.

Involved in the binding of tRNA to the ribosomes. This is Small ribosomal subunit protein uS10 from Methanococcus maripaludis (strain C5 / ATCC BAA-1333).